Consider the following 868-residue polypeptide: Thiol protease/hemagglutinin PrtT (868 aa).

A signal peptide spans 1 to 27 (MKRIFYTLGLLLLCLPMLQAGPVTRSK). Residues C184 and H327 contribute to the active site.

Belongs to the peptidase C10 family.

Its function is as follows. Appears to be specific for arginine-containing peptide bonds. Possesses hemagglutinin activity. The protein is Thiol protease/hemagglutinin PrtT (prtT) of Porphyromonas gingivalis (Bacteroides gingivalis).